The following is a 154-amino-acid chain: MGSLSGLRLAAGSCFRLCERDVSSSLRLTRSSDLKRINGFCTKPQESPGAPSRTYNRVPLHKPTDWQKKILIWSGRFKKEDEIPETVSLEMLDAAKNKMRVKISYLMIALTVVGCIFMVIEGKKAAQRHETLTSLNLEKKARLKEEAAMKAKTE.

The interval 76–102 (RFKKEDEIPETVSLEMLDAAKNKMRVK) is required for proapoptotic activity. The chain crosses the membrane as a helical span at residues 103-120 (ISYLMIALTVVGCIFMVI).

The protein belongs to the UPF0389 family. In terms of assembly, interacts with HSP90AB1; HSP90AB1 is essential for FAM162A mitochondrial localization and pro-apoptotic activity. Interacts with VDAC2; the interaction is probably involved in inducing mitochondrial permeability transition.

It is found in the mitochondrion membrane. Proposed to be involved in regulation of apoptosis; the exact mechanism may differ between cell types/tissues. May be involved in hypoxia-induced cell death of transformed cells implicating cytochrome C release and caspase activation (such as CASP9) and inducing mitochondrial permeability transition. May be involved in hypoxia-induced cell death of neuronal cells probably by promoting release of AIFM1 from mitochondria to cytoplasm and its translocation to the nucleus; however, the involvement of caspases has been reported conflictingly. This chain is Protein FAM162A (FAM162A), found in Homo sapiens (Human).